A 174-amino-acid chain; its full sequence is FITAAFGIPQISTGDMLRAAIKAGTLLGLEAKKIIDEGGLVRDDIIIGMVKERIAQDDCKNGFLFDGFPRTLAQAEAMVEAGVDLDAVVEIDVPDSVIVDRMSGRRVHLASGRTYHVTYNPPKVEGKDDVTGEDLIQRDDDKEETVKKRLAVYHEQTEVLVDFYSKLEGEHAPK.

An NMP region spans residues 12–41 (STGDMLRAAIKAGTLLGLEAKKIIDEGGLV). AMP-binding positions include Thr13, Arg18, 39 to 41 (GLV), 67 to 70 (GFPR), and Gln74. The interval 104–141 (GRRVHLASGRTYHVTYNPPKVEGKDDVTGEDLIQRDDD) is LID. Residues Arg105 and 114 to 115 (TY) contribute to the ATP site. Residues Arg138 and Arg149 each coordinate AMP.

Belongs to the adenylate kinase family. As to quaternary structure, monomer.

It localises to the cytoplasm. It carries out the reaction AMP + ATP = 2 ADP. The protein operates within purine metabolism; AMP biosynthesis via salvage pathway; AMP from ADP: step 1/1. Its function is as follows. Catalyzes the reversible transfer of the terminal phosphate group between ATP and AMP. Plays an important role in cellular energy homeostasis and in adenine nucleotide metabolism. The sequence is that of Adenylate kinase from Neisseria polysaccharea.